The primary structure comprises 163 residues: Dual specificity phosphatase 28 (163 aa).

One can recognise a Tyrosine-protein phosphatase domain in the interval 10 to 151 (PFARVAPALF…LQKYEQTLQA (142 aa)). The active-site Phosphocysteine intermediate is Cys-95.

The protein belongs to the protein-tyrosine phosphatase family. Non-receptor class dual specificity subfamily. In terms of assembly, monomer.

It carries out the reaction O-phospho-L-tyrosyl-[protein] + H2O = L-tyrosyl-[protein] + phosphate. The enzyme catalyses O-phospho-L-seryl-[protein] + H2O = L-seryl-[protein] + phosphate. It catalyses the reaction O-phospho-L-threonyl-[protein] + H2O = L-threonyl-[protein] + phosphate. In terms of biological role, has phosphatase activity with the synthetic substrate 6,8-difluoro-4-methylumbelliferyl phosphate (in vitro). Has almost no detectable activity with phosphotyrosine, even less activity with phosphothreonine and displays complete lack of activity with phosphoserine. The poor activity with phosphotyrosine may be due to steric hindrance by bulky amino acid sidechains that obstruct access to the active site. The polypeptide is Dual specificity phosphatase 28 (Dusp28) (Mus musculus (Mouse)).